The sequence spans 579 residues: CTP synthase (579 aa).

The 249-residue stretch at 310–558 (YVELHDAYLS…VAAAIGCLDQ (249 aa)) folds into the Glutamine amidotransferase type-1 domain. Residues Cys402, His531, and Glu533 each act as for GATase activity in the active site.

It belongs to the CTP synthase family.

The enzyme catalyses UTP + L-glutamine + ATP + H2O = CTP + L-glutamate + ADP + phosphate + 2 H(+). Its pathway is pyrimidine metabolism; CTP biosynthesis via de novo pathway; CTP from UDP: step 2/2. Its function is as follows. Catalyzes the ATP-dependent amination of UTP to CTP with either L-glutamine or ammonia as the source of nitrogen. The polypeptide is CTP synthase (pyr-7) (Neurospora crassa (strain ATCC 24698 / 74-OR23-1A / CBS 708.71 / DSM 1257 / FGSC 987)).